The chain runs to 362 residues: 3-isopropylmalate dehydrogenase (362 aa).

77–88 is an NAD(+) binding site; the sequence is GPKWGTGAVRPE. Positions 95, 105, 134, and 223 each coordinate substrate. 3 residues coordinate Mg(2+): D223, D248, and D252. 287–298 serves as a coordination point for NAD(+); that stretch reads GSAPDLPANKVN.

It belongs to the isocitrate and isopropylmalate dehydrogenases family. In terms of assembly, homodimer. Mg(2+) is required as a cofactor. Mn(2+) serves as cofactor.

The protein resides in the cytoplasm. It carries out the reaction (2R,3S)-3-isopropylmalate + NAD(+) = 4-methyl-2-oxopentanoate + CO2 + NADH. It functions in the pathway amino-acid biosynthesis; L-leucine biosynthesis; L-leucine from 3-methyl-2-oxobutanoate: step 3/4. Catalyzes the oxidation of 3-carboxy-2-hydroxy-4-methylpentanoate (3-isopropylmalate) to 3-carboxy-4-methyl-2-oxopentanoate. The product decarboxylates to 4-methyl-2 oxopentanoate. The sequence is that of 3-isopropylmalate dehydrogenase (LEU2) from Kluyveromyces lactis (strain ATCC 8585 / CBS 2359 / DSM 70799 / NBRC 1267 / NRRL Y-1140 / WM37) (Yeast).